The primary structure comprises 870 residues: DNA mismatch repair protein MutS (870 aa).

620–627 (GPNMAGKS) serves as a coordination point for ATP.

The protein belongs to the DNA mismatch repair MutS family.

Functionally, this protein is involved in the repair of mismatches in DNA. It is possible that it carries out the mismatch recognition step. This protein has a weak ATPase activity. This is DNA mismatch repair protein MutS from Acetivibrio thermocellus (strain ATCC 27405 / DSM 1237 / JCM 9322 / NBRC 103400 / NCIMB 10682 / NRRL B-4536 / VPI 7372) (Clostridium thermocellum).